Reading from the N-terminus, the 337-residue chain is Manganese-dependent ADP-ribose/CDP-alcohol diphosphatase (337 aa).

The residue at position 1 (Met1) is an N-acetylmethionine. 7 residues coordinate Zn(2+): Asp25, Gln27, Asp74, Asn110, His241, His278, and His280.

This sequence belongs to the ADPRibase-Mn family. In terms of assembly, monomer. Mg(2+) serves as cofactor.

The enzyme catalyses CDP-choline + H2O = phosphocholine + CMP + 2 H(+). It carries out the reaction ADP-D-ribose + H2O = D-ribose 5-phosphate + AMP + 2 H(+). It catalyses the reaction CDP-glycerol + H2O = sn-glycerol 3-phosphate + CMP + 2 H(+). In terms of biological role, hydrolyzes ADP-ribose, IDP-ribose, CDP-glycerol, CDP-choline and CDP-ethanolamine, but not other non-reducing ADP-sugars or CDP-glucose. May be involved in immune cell signaling as suggested by the second-messenger role of ADP-ribose, which activates TRPM2 as a mediator of oxidative/nitrosative stress. The sequence is that of Manganese-dependent ADP-ribose/CDP-alcohol diphosphatase (ADPRM) from Bos taurus (Bovine).